The sequence spans 84 residues: Short neurotoxin SNTX-1 (84 aa).

Residues 1-21 (MKTLLLILVVVTIVCLDLVCC) form the signal peptide. Intrachain disulfides connect Cys-25/Cys-46, Cys-39/Cys-63, Cys-65/Cys-76, and Cys-77/Cys-82.

This sequence belongs to the three-finger toxin family. Short-chain subfamily. Type I alpha-neurotoxin sub-subfamily. As to expression, expressed by the venom gland.

The protein resides in the secreted. Binds to muscle nicotinic acetylcholine receptor (nAChR) and inhibit acetylcholine from binding to the receptor, thereby impairing neuromuscular transmission. In Demansia vestigiata (Lesser black whip snake), this protein is Short neurotoxin SNTX-1.